The following is a 68-amino-acid chain: Large ribosomal subunit protein uL29 (68 aa).

The protein belongs to the universal ribosomal protein uL29 family.

The polypeptide is Large ribosomal subunit protein uL29 (Nitrobacter winogradskyi (strain ATCC 25391 / DSM 10237 / CIP 104748 / NCIMB 11846 / Nb-255)).